We begin with the raw amino-acid sequence, 55 residues long: Small ribosomal subunit protein eS31 (55 aa).

Zn(2+)-binding residues include Cys26, Cys29, Cys44, and Cys47.

It belongs to the eukaryotic ribosomal protein eS31 family. Part of the 30S ribosomal subunit. Requires Zn(2+) as cofactor.

The protein is Small ribosomal subunit protein eS31 of Archaeoglobus fulgidus (strain ATCC 49558 / DSM 4304 / JCM 9628 / NBRC 100126 / VC-16).